The primary structure comprises 482 residues: Proline--tRNA ligase (482 aa).

It belongs to the class-II aminoacyl-tRNA synthetase family. ProS type 3 subfamily. As to quaternary structure, homodimer.

It localises to the cytoplasm. The enzyme catalyses tRNA(Pro) + L-proline + ATP = L-prolyl-tRNA(Pro) + AMP + diphosphate. Catalyzes the attachment of proline to tRNA(Pro) in a two-step reaction: proline is first activated by ATP to form Pro-AMP and then transferred to the acceptor end of tRNA(Pro). This Mycoplasmopsis synoviae (strain 53) (Mycoplasma synoviae) protein is Proline--tRNA ligase.